A 417-amino-acid polypeptide reads, in one-letter code: Tyrosine--tRNA ligase (417 aa).

Tyr-34 contributes to the L-tyrosine binding site. The 'HIGH' region motif lies at 39-48 (PTGDSMHIGH). L-tyrosine contacts are provided by Tyr-165 and Gln-169. Positions 227–231 (KFGKS) match the 'KMSKS' region motif. ATP is bound at residue Lys-230. Residues 349-417 (ENIVLWLVDT…KKKYFLARVK (69 aa)) enclose the S4 RNA-binding domain.

The protein belongs to the class-I aminoacyl-tRNA synthetase family. TyrS type 1 subfamily. In terms of assembly, homodimer.

It is found in the cytoplasm. The enzyme catalyses tRNA(Tyr) + L-tyrosine + ATP = L-tyrosyl-tRNA(Tyr) + AMP + diphosphate + H(+). Catalyzes the attachment of tyrosine to tRNA(Tyr) in a two-step reaction: tyrosine is first activated by ATP to form Tyr-AMP and then transferred to the acceptor end of tRNA(Tyr). This chain is Tyrosine--tRNA ligase, found in Pediococcus pentosaceus (strain ATCC 25745 / CCUG 21536 / LMG 10740 / 183-1w).